Reading from the N-terminus, the 982-residue chain is Glutamate [NMDA] receptor subunit 1 (982 aa).

An N-terminal signal peptide occupies residues 1–22; it reads MRVAFIYRWLLCGAAIVNVLVA. The Extracellular portion of the chain corresponds to 23–568; the sequence is QRHTASDNPS…TLVSFLQPFS (546 aa). Residues asparagine 253, asparagine 309, asparagine 340, asparagine 392, asparagine 449, asparagine 476, and asparagine 496 are each glycosylated (N-linked (GlcNAc...) asparagine). Residues 525–527 and arginine 532 each bind glycine; that span reads PLT. The helical transmembrane segment at 569–589 threads the bilayer; the sequence is NTLWILVMVSVHVVALVLYLL. Residues 590-646 are Cytoplasmic-facing; it reads DRFSPFGRFKLSHSDSNEEKALNLSSAVWFAWGVLLNSGIGEGTPRSFSARVLGMVW. A helical transmembrane segment spans residues 647-667; that stretch reads AGFAMIIVASYTANLAAFLVL. The Extracellular segment spans residues 668-826; it reads ERPKTKLSGI…KTPNTLGLKN (159 aa). Asparagine 688 is a glycosylation site (N-linked (GlcNAc...) asparagine). Residues serine 698 and aspartate 742 each contribute to the glycine site. The chain crosses the membrane as a helical span at residues 827–847; that stretch reads MAGVFILVGVGIAGGVGLIII. Topologically, residues 848–982 are cytoplasmic; it reads EVIYKKHQVK…YTSDVSHLVV (135 aa). The tract at residues 948–982 is disordered; sequence LTASQLGLGKTRPQQNPLPPRYSPGYTSDVSHLVV. Residues 972–982 are compositionally biased toward polar residues; sequence GYTSDVSHLVV.

It belongs to the glutamate-gated ion channel (TC 1.A.10.1) family. In terms of assembly, forms a heteromeric NMDA channel with Nmdar2.

The protein localises to the cell membrane. Its subcellular location is the postsynaptic cell membrane. It localises to the postsynaptic density. Its function is as follows. NMDA receptor subtype of glutamate-gated ion channels with high calcium permeability and voltage-dependent sensitivity to magnesium. Mediated by glycine. This protein plays a key role in synaptic plasticity, synaptogenesis, excitotoxicity, memory acquisition and learning. It mediates neuronal functions in glutamate neurotransmission. Is involved in the cell surface targeting of NMDA receptors. Plays a role in associative learning and in long-term memory consolidation. The chain is Glutamate [NMDA] receptor subunit 1 from Drosophila grimshawi (Hawaiian fruit fly).